The chain runs to 1081 residues: Disheveled-associated activator of morphogenesis 1-A (1081 aa).

Residues 45 to 418 (LPVPPVEELD…QIVIQNEKGQ (374 aa)) form the GBD/FH3 domain. 2 disordered regions span residues 455 to 476 (KEHN…AKTQ) and 519 to 615 (RTVC…PLKS). The segment covering 526-536 (PGGPPPPPGAP) has biased composition (pro residues). Residues 538–547 (GPMSMPSGNF) are compositionally biased toward low complexity. Over residues 548 to 585 (MPPPPPPPPPFPGGMAPPPPPPPPPPPPPGGPPPPPGL) the composition is skewed to pro residues. Residues 586–600 (PLLGAAPPGAPLGLS) show a composition bias toward low complexity. In terms of domain architecture, FH2 spans 603–1012 (KKNIPQPKNP…EERRIRMEAQ (410 aa)). The interval 696-705 (AQNCNILLSR) is actin-binding. Basic and acidic residues predominate over residues 1013-1029 (LKEQRERERKARKAKEN). Disordered regions lie at residues 1013–1038 (LKEQ…EFDD) and 1060–1081 (RKRI…KLNY). Positions 1030–1061 (GEEEGEFDDLVSALRSGEVFDKDLSKLKRNRK) constitute a DAD domain. Positions 1070 to 1081 (SSRERPVTKLNY) are enriched in basic and acidic residues.

It is found in the cytoplasm. It localises to the cytoskeleton. Its subcellular location is the cilium basal body. Functionally, binds to disheveled (dsh) and Rho, and mediates Wnt-induced dsh-Rho complex formation during gastrulation. May play a role as a scaffolding protein to recruit Rho-GDP and Rho-GEF, thereby enhancing Rho-GTP formation. Can direct nucleation and elongation of new actin filaments. Involved in building functional cilia. Involved in building functional cilia. Involved in the organization of the subapical actin network in multiciliated epithelial cells. The sequence is that of Disheveled-associated activator of morphogenesis 1-A (daam1-a) from Xenopus laevis (African clawed frog).